A 764-amino-acid chain; its full sequence is FAST kinase domain-containing protein 5, mitochondrial (764 aa).

Residues 1-27 (MAATLKSLKLVRYRAFCSPSAFGAVRS) constitute a mitochondrion transit peptide. Residue Ser-95 is modified to Phosphoserine. Lys-507 carries the post-translational modification N6-acetyllysine. Residues 697–757 (LAVQFTNRNQ…RLEKLAFLHE (61 aa)) form the RAP domain.

It belongs to the FAST kinase family. In terms of assembly, found in a complex with GRSF1, DDX28, DHX30 and FASTKD2. Associates with the 12S mitochondrial rRNA (12S mt-rRNA). Expression detected in spleen, thymus, testis, ovary, colon, heart, smooth muscle, kidney, brain, lung, liver and white adipose tissue with highest expression in heart, smooth muscle, liver and thyroid.

It localises to the mitochondrion matrix. It is found in the mitochondrion nucleoid. In terms of biological role, plays an important role in the processing of non-canonical mitochondrial mRNA precursors. The sequence is that of FAST kinase domain-containing protein 5, mitochondrial (FASTKD5) from Homo sapiens (Human).